The sequence spans 190 residues: Peptidyl-tRNA hydrolase (190 aa).

Phe-14 is a tRNA binding site. The Proton acceptor role is filled by His-19. Positions 64, 66, and 112 each coordinate tRNA.

The protein belongs to the PTH family. Monomer.

It is found in the cytoplasm. The catalysed reaction is an N-acyl-L-alpha-aminoacyl-tRNA + H2O = an N-acyl-L-amino acid + a tRNA + H(+). Its function is as follows. Hydrolyzes ribosome-free peptidyl-tRNAs (with 1 or more amino acids incorporated), which drop off the ribosome during protein synthesis, or as a result of ribosome stalling. In terms of biological role, catalyzes the release of premature peptidyl moieties from peptidyl-tRNA molecules trapped in stalled 50S ribosomal subunits, and thus maintains levels of free tRNAs and 50S ribosomes. The protein is Peptidyl-tRNA hydrolase of Staphylococcus haemolyticus (strain JCSC1435).